Here is a 539-residue protein sequence, read N- to C-terminus: GMP synthase [glutamine-hydrolyzing] (539 aa).

The Glutamine amidotransferase type-1 domain maps to Lys4 to Asp202. Cys81 (nucleophile) is an active-site residue. Catalysis depends on residues His176 and Glu178. The GMPS ATP-PPase domain maps to Trp203 to Arg395. Ser230 to Ser236 serves as a coordination point for ATP.

In terms of assembly, homodimer.

The catalysed reaction is XMP + L-glutamine + ATP + H2O = GMP + L-glutamate + AMP + diphosphate + 2 H(+). It participates in purine metabolism; GMP biosynthesis; GMP from XMP (L-Gln route): step 1/1. Functionally, catalyzes the synthesis of GMP from XMP. This Burkholderia orbicola (strain AU 1054) protein is GMP synthase [glutamine-hydrolyzing].